The sequence spans 279 residues: Ribosomal RNA small subunit methyltransferase A (279 aa).

6 residues coordinate S-adenosyl-L-methionine: His-11, Leu-13, Gly-42, Glu-63, Asp-88, and Asn-104.

Belongs to the class I-like SAM-binding methyltransferase superfamily. rRNA adenine N(6)-methyltransferase family. RsmA subfamily.

It is found in the cytoplasm. The catalysed reaction is adenosine(1518)/adenosine(1519) in 16S rRNA + 4 S-adenosyl-L-methionine = N(6)-dimethyladenosine(1518)/N(6)-dimethyladenosine(1519) in 16S rRNA + 4 S-adenosyl-L-homocysteine + 4 H(+). Functionally, specifically dimethylates two adjacent adenosines (A1518 and A1519) in the loop of a conserved hairpin near the 3'-end of 16S rRNA in the 30S particle. May play a critical role in biogenesis of 30S subunits. The polypeptide is Ribosomal RNA small subunit methyltransferase A (Synechococcus sp. (strain JA-3-3Ab) (Cyanobacteria bacterium Yellowstone A-Prime)).